The chain runs to 361 residues: DNA replication and repair protein RecF (361 aa).

Gly30 to Thr37 lines the ATP pocket.

The protein belongs to the RecF family.

The protein localises to the cytoplasm. The RecF protein is involved in DNA metabolism; it is required for DNA replication and normal SOS inducibility. RecF binds preferentially to single-stranded, linear DNA. It also seems to bind ATP. This is DNA replication and repair protein RecF from Yersinia pseudotuberculosis serotype O:1b (strain IP 31758).